The sequence spans 277 residues: Putative hydro-lyase BPP3031 (277 aa).

It belongs to the D-glutamate cyclase family.

This Bordetella parapertussis (strain 12822 / ATCC BAA-587 / NCTC 13253) protein is Putative hydro-lyase BPP3031.